The chain runs to 177 residues: Tail tube protein (177 aa).

It belongs to the T4-like viruses Gp19 protein family.

The protein resides in the virion. Functionally, structural component of the bacteriophage tail which consists of a contractile sheath, a tube and a baseplate. The central cylindrical segment of the tail consists of a rigid tube, composed of multiple copies of the tail tube protein. During infection, contraction of the sheath drives the central tube through the host outer membrane, creating a channel for DNA ejection from the capsid into the host cell. The sequence is that of Tail tube protein from Serratia marcescens (Serratia marcescens bacteriophage KSP90).